Here is a 1025-residue protein sequence, read N- to C-terminus: Exportin-T (1025 aa).

It belongs to the exportin family.

It localises to the nucleus. Its subcellular location is the cytoplasm. Functionally, tRNA nucleus export receptor which facilitates tRNA translocation across the nuclear pore complex. Involved in pre-tRNA splicing, probably by affecting the interaction of pre-tRNA with splicing endonuclease. This is Exportin-T (LOS1) from Yarrowia lipolytica (strain CLIB 122 / E 150) (Yeast).